A 617-amino-acid chain; its full sequence is Bifunctional TH2 protein, mitochondrial (617 aa).

The transit peptide at 1–28 (MRFLFPTRLINNSSLGLLRSPHTTAPIR) directs the protein to the mitochondrion. D107 serves as a coordination point for substrate. Residue C213 is the Nucleophile of the active site. Residues Y217 and Y244 each contribute to the substrate site. The active-site Proton donor is the E286.

The protein in the N-terminal section; belongs to the TenA family. It in the C-terminal section; belongs to the HAD-like hydrolase superfamily.

It localises to the mitochondrion. Its subcellular location is the cytoplasm. The catalysed reaction is thiamine phosphate + H2O = thiamine + phosphate. It catalyses the reaction 4-amino-5-aminomethyl-2-methylpyrimidine + H2O = 4-amino-5-hydroxymethyl-2-methylpyrimidine + NH4(+). Its function is as follows. May be involved in the salvage of thiamine breakdown products. This protein has a haloacid dehalogenase family domain fused to its TenA domain. Phosphatase with the highest activity against thiamine monophosphate (ThMP) and, with a lower activity, against thiamine diphosphate (ThDP), flavin mononucleotide, inorganic pyrophosphate, CTP and dATP. Has a thiamine salvage hydrolase activity, but only against 4-amino-5-aminomethyl-2-methylpyrimidine (amino-HMP) and not against N-formylamino-HMP, desthiothiamine, thiamine, ThMP, and ThDP. The protein is Bifunctional TH2 protein, mitochondrial of Arabidopsis thaliana (Mouse-ear cress).